Here is a 132-residue protein sequence, read N- to C-terminus: Large ribosomal subunit protein uL14 (132 aa).

This sequence belongs to the universal ribosomal protein uL14 family. In terms of assembly, part of the 50S ribosomal subunit. Forms a cluster with proteins L3 and L24e, part of which may contact the 16S rRNA in 2 intersubunit bridges.

Its function is as follows. Binds to 23S rRNA. Forms part of two intersubunit bridges in the 70S ribosome. The polypeptide is Large ribosomal subunit protein uL14 (Halobacterium salinarum (strain ATCC 29341 / DSM 671 / R1)).